The following is a 284-amino-acid chain: Ribosomal RNA small subunit methyltransferase A (284 aa).

Residues N26, L28, G53, E74, D97, and N127 each coordinate S-adenosyl-L-methionine.

Belongs to the class I-like SAM-binding methyltransferase superfamily. rRNA adenine N(6)-methyltransferase family. RsmA subfamily.

Its subcellular location is the cytoplasm. It catalyses the reaction adenosine(1518)/adenosine(1519) in 16S rRNA + 4 S-adenosyl-L-methionine = N(6)-dimethyladenosine(1518)/N(6)-dimethyladenosine(1519) in 16S rRNA + 4 S-adenosyl-L-homocysteine + 4 H(+). Its function is as follows. Specifically dimethylates two adjacent adenosines (A1518 and A1519) in the loop of a conserved hairpin near the 3'-end of 16S rRNA in the 30S particle. May play a critical role in biogenesis of 30S subunits. This is Ribosomal RNA small subunit methyltransferase A from Anaeromyxobacter dehalogenans (strain 2CP-1 / ATCC BAA-258).